The sequence spans 564 residues: MSDEIARRIAQGAGRAPADLVIRDARLLDLVTGDLVDTDIAVCGDGIVGTYGEYAGTRVIEAEGRVAVPGFIDTHLHVESSLITPHEFDRCVLPHGVTTAIWDPHELANVLGTAAFDYALQAARETVMDIRVQLSSCVPATDLESSGARIEAEALRPYRDHPGSLGLAEFMNFPGIVAGDPACLAKLALFAGRHVDGHAPLLSGRDLNAYVAAGIRTDHETTGPAEALEKIRKGMTVLIREGSVSKDLRALAPLLTVATSPFLAFCTDDRNPLDIAEEGHLDALIRMAIGLGVAPLAAYRAASLSAATAFGLADRGMIAPGRRADIVLLDDVETCAVARVIAGGRPAEEALAAPRTRTPAPGRGSVKAAPVAPEAFRVAAAPGETSVIGVVPGRIITEHRRLTLPARDGAALCDLAQDAVKVAVIARHGAPGMACGFVQGFGLRRGAIASSVGHDSHNLCVVGADEADMALAVNRLIALQGGFVVAEGGAVRAELALPIAGLMSDLPFEAVRDALHPLREAARGLGCTLPEPFLQVAFLPLPMIPHLKITDRGLVDVDRMRILP.

It belongs to the metallo-dependent hydrolases superfamily. Adenine deaminase family. Requires Mn(2+) as cofactor.

The catalysed reaction is adenine + H2O + H(+) = hypoxanthine + NH4(+). The chain is Adenine deaminase from Methylobacterium sp. (strain 4-46).